A 73-amino-acid chain; its full sequence is Translational regulator CsrA (73 aa).

It belongs to the CsrA/RsmA family. As to quaternary structure, homodimer; the beta-strands of each monomer intercalate to form a hydrophobic core, while the alpha-helices form wings that extend away from the core.

It localises to the cytoplasm. Functionally, a translational regulator that binds mRNA to regulate translation initiation and/or mRNA stability. Usually binds in the 5'-UTR at or near the Shine-Dalgarno sequence preventing ribosome-binding, thus repressing translation. Its main target seems to be the major flagellin gene, while its function is anatagonized by FliW. The sequence is that of Translational regulator CsrA from Clostridium acetobutylicum (strain ATCC 824 / DSM 792 / JCM 1419 / IAM 19013 / LMG 5710 / NBRC 13948 / NRRL B-527 / VKM B-1787 / 2291 / W).